Reading from the N-terminus, the 682-residue chain is Potassium-transporting ATPase ATP-binding subunit (682 aa).

4 helical membrane-spanning segments follow: residues Pro34–Ala54, Ala62–Ala82, Ile219–Leu239, and Val254–Ile274. The 4-aspartylphosphate intermediate role is filled by Asp307. Residues Asp344, Glu348, Phe377 to Ser384, and Lys395 each bind ATP. Mg(2+) contacts are provided by Asp518 and Asp522. Helical transmembrane passes span Phe588–Met608, Ala616–Leu636, and Ile656–Leu676.

It belongs to the cation transport ATPase (P-type) (TC 3.A.3) family. Type IA subfamily. As to quaternary structure, the system is composed of three essential subunits: KdpA, KdpB and KdpC.

It is found in the cell inner membrane. The enzyme catalyses K(+)(out) + ATP + H2O = K(+)(in) + ADP + phosphate + H(+). Its function is as follows. Part of the high-affinity ATP-driven potassium transport (or Kdp) system, which catalyzes the hydrolysis of ATP coupled with the electrogenic transport of potassium into the cytoplasm. This subunit is responsible for energy coupling to the transport system and for the release of the potassium ions to the cytoplasm. The sequence is that of Potassium-transporting ATPase ATP-binding subunit from Escherichia coli (strain ATCC 8739 / DSM 1576 / NBRC 3972 / NCIMB 8545 / WDCM 00012 / Crooks).